The primary structure comprises 282 residues: 5'-adenylylsulfate reductase-like 2 (282 aa).

A signal peptide spans 1–19 (MRWWPALPLLLLAVAVAGA). Residues 20-159 (GDAAPVCTRP…LAAFYNDVSG (140 aa)) form the Thioredoxin domain. Asn-134 is a glycosylation site (N-linked (GlcNAc...) asparagine). A helical membrane pass occupies residues 205-225 (AASFVILRLLYLFYPKITAFV).

The protein localises to the membrane. This is 5'-adenylylsulfate reductase-like 2 (APRL2) from Oryza sativa subsp. japonica (Rice).